Reading from the N-terminus, the 465-residue chain is Glutathione reductase (465 aa).

FAD-binding residues include Ser-16 and Gly-17. Ser-16 contributes to the glutathione binding site. Residue Arg-23 participates in glutathione binding. FAD-binding residues include Glu-42, Thr-49, Cys-50, and Lys-58. A disulfide bridge links Cys-50 with Cys-55. Glutathione is bound at residue Tyr-108. FAD is bound at residue Gly-124. NADP(+) contacts are provided by Ala-187, Ile-190, Glu-193, Arg-210, Arg-216, and Gly-276. Asp-318 is a binding site for FAD. Leu-324 lines the NADP(+) pocket. Thr-326 provides a ligand contact to FAD. Arg-334 provides a ligand contact to glutathione. Val-357 contacts NADP(+). Position 454 (His-454) interacts with FAD. His-454 (proton acceptor) is an active-site residue.

Belongs to the class-I pyridine nucleotide-disulfide oxidoreductase family. FAD is required as a cofactor.

It localises to the cytoplasm. The catalysed reaction is 2 glutathione + NADP(+) = glutathione disulfide + NADPH + H(+). Functionally, catalyzes the reduction of glutathione disulfide (GSSG) to reduced glutathione (GSH). Constitutes the major mechanism to maintain a high GSH:GSSG ratio in the cytosol. The amount of GSH may affect the determination of cell fate. This Dictyostelium discoideum (Social amoeba) protein is Glutathione reductase (gsr).